Reading from the N-terminus, the 291-residue chain is Inactive dihydropteroate synthase 2 (291 aa).

The region spanning 15-272 is the Pterin-binding domain; the sequence is QLIMAIVNRT…EVVATRRVLE (258 aa).

This sequence belongs to the DHPS family. As to quaternary structure, homodimer.

Has very low affinity for the DHPS substrate 6-hydroxymethyl-7,8-dihydropterin-pyrophosphate, but can bind the inhibitor dapsone. Seems to lack dihydropteroate synthase activity, and does probably not function in folate metabolism. This Mycobacterium leprae (strain TN) protein is Inactive dihydropteroate synthase 2 (folP2).